Reading from the N-terminus, the 327-residue chain is Annexin A8 (327 aa).

4 Annexin repeats span residues 21–92 (FNPD…ALMY), 93–164 (PPYS…CLLQ), 177–249 (GLVL…TVVK), and 253–324 (NVHS…NLVG). Ca(2+)-binding residues include methionine 266, glycine 268, glycine 270, and aspartate 310.

The protein belongs to the annexin family.

Functionally, this protein is an anticoagulant protein that acts as an indirect inhibitor of the thromboplastin-specific complex, which is involved in the blood coagulation cascade. This Mus musculus (Mouse) protein is Annexin A8 (Anxa8).